A 481-amino-acid chain; its full sequence is Phospho-2-dehydro-3-deoxyheptonate aldolase (481 aa).

A disordered region spans residues 1-22; it reads MSQQTTPNAPGWAPDSWRSKPI.

Belongs to the class-II DAHP synthase family. Homodimer. Post-translationally, the N-terminus is blocked.

The catalysed reaction is D-erythrose 4-phosphate + phosphoenolpyruvate + H2O = 7-phospho-2-dehydro-3-deoxy-D-arabino-heptonate + phosphate. The protein operates within metabolic intermediate biosynthesis; chorismate biosynthesis; chorismate from D-erythrose 4-phosphate and phosphoenolpyruvate: step 1/7. This Neurospora crassa (strain ATCC 24698 / 74-OR23-1A / CBS 708.71 / DSM 1257 / FGSC 987) protein is Phospho-2-dehydro-3-deoxyheptonate aldolase (aro-8).